Consider the following 303-residue polypeptide: Probable serine acetyltransferase 1 (303 aa).

Disordered stretches follow at residues 1–36 (MTAGQPLRDDPQPRRHSPPALHPAVVPAYPPPESDA) and 271–290 (NPARLLGGKKGDDMPGESMD).

Belongs to the transferase hexapeptide repeat family. In terms of assembly, homomultimer.

It carries out the reaction L-serine + acetyl-CoA = O-acetyl-L-serine + CoA. It participates in amino-acid biosynthesis; L-cysteine biosynthesis; L-cysteine from L-serine: step 1/2. The protein is Probable serine acetyltransferase 1 (SAT1) of Oryza sativa subsp. japonica (Rice).